The following is an 865-amino-acid chain: Alanine--tRNA ligase (865 aa).

Positions 568, 572, 670, and 674 each coordinate Zn(2+).

This sequence belongs to the class-II aminoacyl-tRNA synthetase family. Requires Zn(2+) as cofactor.

It localises to the cytoplasm. The catalysed reaction is tRNA(Ala) + L-alanine + ATP = L-alanyl-tRNA(Ala) + AMP + diphosphate. Its function is as follows. Catalyzes the attachment of alanine to tRNA(Ala) in a two-step reaction: alanine is first activated by ATP to form Ala-AMP and then transferred to the acceptor end of tRNA(Ala). Also edits incorrectly charged Ser-tRNA(Ala) and Gly-tRNA(Ala) via its editing domain. The sequence is that of Alanine--tRNA ligase from Vibrio campbellii (strain ATCC BAA-1116).